The sequence spans 71 residues: Translational regulator CsrA (71 aa).

A disordered region spans residues 50 to 71 (RIRHEKDGDVPEAAPGQGADPQ).

The protein belongs to the CsrA/RsmA family. As to quaternary structure, homodimer; the beta-strands of each monomer intercalate to form a hydrophobic core, while the alpha-helices form wings that extend away from the core.

It is found in the cytoplasm. Functionally, a key translational regulator that binds mRNA to regulate translation initiation and/or mRNA stability. Mediates global changes in gene expression, shifting from rapid growth to stress survival by linking envelope stress, the stringent response and the catabolite repression systems. Usually binds in the 5'-UTR; binding at or near the Shine-Dalgarno sequence prevents ribosome-binding, repressing translation, binding elsewhere in the 5'-UTR can activate translation and/or stabilize the mRNA. Its function is antagonized by small RNA(s). The sequence is that of Translational regulator CsrA from Halorhodospira halophila (strain DSM 244 / SL1) (Ectothiorhodospira halophila (strain DSM 244 / SL1)).